The chain runs to 214 residues: Thiamine-phosphate synthase (214 aa).

4-amino-2-methyl-5-(diphosphooxymethyl)pyrimidine is bound by residues 38–42 (QLREK) and Asn70. The Mg(2+) site is built by Asp71 and Asp90. Residues Ser109 and Lys138 each coordinate 4-amino-2-methyl-5-(diphosphooxymethyl)pyrimidine. Position 165 (Gly165) interacts with 2-[(2R,5Z)-2-carboxy-4-methylthiazol-5(2H)-ylidene]ethyl phosphate.

The protein belongs to the thiamine-phosphate synthase family. Mg(2+) is required as a cofactor.

It carries out the reaction 2-[(2R,5Z)-2-carboxy-4-methylthiazol-5(2H)-ylidene]ethyl phosphate + 4-amino-2-methyl-5-(diphosphooxymethyl)pyrimidine + 2 H(+) = thiamine phosphate + CO2 + diphosphate. The catalysed reaction is 2-(2-carboxy-4-methylthiazol-5-yl)ethyl phosphate + 4-amino-2-methyl-5-(diphosphooxymethyl)pyrimidine + 2 H(+) = thiamine phosphate + CO2 + diphosphate. The enzyme catalyses 4-methyl-5-(2-phosphooxyethyl)-thiazole + 4-amino-2-methyl-5-(diphosphooxymethyl)pyrimidine + H(+) = thiamine phosphate + diphosphate. It participates in cofactor biosynthesis; thiamine diphosphate biosynthesis; thiamine phosphate from 4-amino-2-methyl-5-diphosphomethylpyrimidine and 4-methyl-5-(2-phosphoethyl)-thiazole: step 1/1. In terms of biological role, condenses 4-methyl-5-(beta-hydroxyethyl)thiazole monophosphate (THZ-P) and 2-methyl-4-amino-5-hydroxymethyl pyrimidine pyrophosphate (HMP-PP) to form thiamine monophosphate (TMP). The sequence is that of Thiamine-phosphate synthase from Caldanaerobacter subterraneus subsp. tengcongensis (strain DSM 15242 / JCM 11007 / NBRC 100824 / MB4) (Thermoanaerobacter tengcongensis).